Reading from the N-terminus, the 91-residue chain is Small ribosomal subunit protein uS15 (91 aa).

This sequence belongs to the universal ribosomal protein uS15 family. As to quaternary structure, part of the 30S ribosomal subunit. Forms a bridge to the 50S subunit in the 70S ribosome, contacting the 23S rRNA.

One of the primary rRNA binding proteins, it binds directly to 16S rRNA where it helps nucleate assembly of the platform of the 30S subunit by binding and bridging several RNA helices of the 16S rRNA. In terms of biological role, forms an intersubunit bridge (bridge B4) with the 23S rRNA of the 50S subunit in the ribosome. The protein is Small ribosomal subunit protein uS15 of Legionella pneumophila (strain Corby).